Reading from the N-terminus, the 136-residue chain is ATP synthase epsilon chain (136 aa).

Belongs to the ATPase epsilon chain family. As to quaternary structure, F-type ATPases have 2 components, CF(1) - the catalytic core - and CF(0) - the membrane proton channel. CF(1) has five subunits: alpha(3), beta(3), gamma(1), delta(1), epsilon(1). CF(0) has three main subunits: a, b and c.

The protein resides in the cell inner membrane. In terms of biological role, produces ATP from ADP in the presence of a proton gradient across the membrane. The sequence is that of ATP synthase epsilon chain from Persephonella marina (strain DSM 14350 / EX-H1).